Here is a 180-residue protein sequence, read N- to C-terminus: Cytokinin-beta-glucosidase 1 (180 aa).

Hydrolyzes cytokinin glucosides thus liberating free cytokinins. In Panax ginseng (Korean ginseng), this protein is Cytokinin-beta-glucosidase 1 (ROLC1).